The sequence spans 314 residues: Hydroxyethylthiazole kinase (314 aa).

Positions 1–13 are enriched in low complexity; sequence MSNSASSFADVSS. Residues 1–24 form a disordered region; the sequence is MSNSASSFADVSSGCTAGTPVPAD. M70 is a binding site for substrate. ATP is bound by residues R145 and S217. Residue G244 coordinates substrate.

Belongs to the Thz kinase family. Mg(2+) is required as a cofactor.

It carries out the reaction 5-(2-hydroxyethyl)-4-methylthiazole + ATP = 4-methyl-5-(2-phosphooxyethyl)-thiazole + ADP + H(+). It participates in cofactor biosynthesis; thiamine diphosphate biosynthesis; 4-methyl-5-(2-phosphoethyl)-thiazole from 5-(2-hydroxyethyl)-4-methylthiazole: step 1/1. Its function is as follows. Catalyzes the phosphorylation of the hydroxyl group of 4-methyl-5-beta-hydroxyethylthiazole (THZ). This chain is Hydroxyethylthiazole kinase, found in Bifidobacterium longum subsp. infantis (strain ATCC 15697 / DSM 20088 / JCM 1222 / NCTC 11817 / S12).